We begin with the raw amino-acid sequence, 475 residues long: Peroxisome proliferator-activated receptor gamma (475 aa).

Threonine 54 carries O-linked (GlcNAc) threonine glycosylation. Serine 82 carries the post-translational modification Phosphoserine; by MAPK. Residues 106–180 (AIECRVCGDK…VGMSHNAIRF (75 aa)) constitute a DNA-binding region (nuclear receptor). 2 consecutive NR C4-type zinc fingers follow at residues 109 to 129 (CRVC…CEGC) and 146 to 168 (CDLN…FQKC). The tract at residues 175–250 (HNAIRFGRMP…DKSPFVIYDM (76 aa)) is interaction with FAM120B. The NR LBD domain maps to 208–473 (DLRALAKHLY…HPLLQEIYKD (266 aa)). Residue lysine 222 forms a Glycyl lysine isopeptide (Lys-Gly) (interchain with G-Cter in ubiquitin) linkage. A 9aaTAD motif is present at residues 465-473 (PLLQEIYKD).

This sequence belongs to the nuclear hormone receptor family. NR1 subfamily. As to quaternary structure, interacts with FOXO1 (acetylated form). Heterodimer with other nuclear receptors, such as RXRA. The heterodimer with the retinoic acid receptor RXRA is called adipocyte-specific transcription factor ARF6. Interacts with NCOA6 coactivator, leading to a strong increase in transcription of target genes. Interacts with coactivator PPARBP, leading to a mild increase in transcription of target genes. Interacts with NOCA7 in a ligand-inducible manner. Interacts with NCOA1 and NCOA2 LXXLL motifs. Interacts with ASXL1, ASXL2, DNTTIP2, FAM120B, MAP2K1/MEK1, NR0B2, PDPK1, PRDM16, PRMT2 and TGFB1I1. Interacts (when activated by agonist) with PPP5C. Interacts with HELZ2 and THRAP3; the interaction stimulates the transcriptional activity of PPARG. Interacts with PER2, the interaction is ligand dependent and blocks PPARG recruitment to target promoters. Interacts with NOCT. Interacts with ACTN4. Interacts (when in the liganded conformation) with GPS2. Interacts with CRY1 and CRY2 in a ligand-dependent manner. In the absence of hormonal ligand, interacts with TACC1. In macrophages, interacts with PAQR3 and STUB1; the interactions promote PPARG poylubiquitination and STUB1-mediated degradation. In terms of processing, O-GlcNAcylation at Thr-54 reduces transcriptional activity in adipocytes. Phosphorylated at basal conditions and dephosphorylated when treated with the ligand. May be dephosphorylated by PPP5C. The phosphorylated form may be inactive and dephosphorylation induces adipogenic activity. Post-translationally, ubiquitinated by E3 ubiquitin-protein ligase complex containing FBXO9; leading to proteasomal degradation. Ubiquitinated at Lys-222 by TRIM55 leading to proteasomal degradation. Ubiquitinated by E3 ubiquitin-protein ligase STUB1/CHIP; leading to proteasomal degradation.

It localises to the nucleus. The protein resides in the cytoplasm. Its activity is regulated as follows. PDPK1 activates its transcriptional activity independently of its kinase activity. Interacts with HELZ2 and THRAP3; the interaction enhances the transcriptional activity of PPARG. In terms of biological role, nuclear receptor that binds peroxisome proliferators such as hypolipidemic drugs and fatty acids. Once activated by a ligand, the nuclear receptor binds to DNA specific PPAR response elements (PPRE) and modulates the transcription of its target genes, such as acyl-CoA oxidase. It therefore controls the peroxisomal beta-oxidation pathway of fatty acids. Key regulator of adipocyte differentiation and glucose homeostasis. ARF6 acts as a key regulator of the tissue-specific adipocyte P2 (aP2) enhancer. Acts as a critical regulator of gut homeostasis by suppressing NF-kappa-B-mediated pro-inflammatory responses. Plays a role in the regulation of cardiovascular circadian rhythms by regulating the transcription of BMAL1 in the blood vessels. The protein is Peroxisome proliferator-activated receptor gamma (PPARG) of Cricetulus griseus (Chinese hamster).